Reading from the N-terminus, the 180-residue chain is Pro-glucagon (180 aa).

The N-terminal stretch at 1-20 (MKTIYFVAGLFVMLVQGSWQ) is a signal peptide. The interval 25–59 (NTEEKSRSFPAPQTDPLDDPDQMTEDKRHSQGTFT) is disordered. Serine 54 bears the Phosphoserine mark. A propeptide spanning residues 84 to 89 (NKNNIA) is cleaved from the precursor. A phosphoserine mark is found at serine 105 and serine 108. Position 127 is an arginine amide (arginine 127). The propeptide occupies 131-145 (DFPEEVTIVEELRRR). A phosphoserine mark is found at serine 150 and serine 152.

The protein belongs to the glucagon family. Proglucagon is post-translationally processed in a tissue-specific manner in pancreatic A cells and intestinal L cells. In pancreatic A cells, the major bioactive hormone is glucagon cleaved by PCSK2/PC2. In the intestinal L cells PCSK1/PC1 liberates GLP-1, GLP-2, glicentin and oxyntomodulin. GLP-1 is further N-terminally truncated by post-translational processing in the intestinal L cells resulting in GLP-1(7-37) GLP-1-(7-36)amide. The C-terminal amidation is neither important for the metabolism of GLP-1 nor for its effects on the endocrine pancreas. Glucagon is secreted in the A cells of the islets of Langerhans. GLP-1, GLP-2, oxyntomodulin and glicentin are secreted from enteroendocrine cells throughout the gastrointestinal tract. GLP-1 and GLP-2 are also secreted in selected neurons in the brain.

It localises to the secreted. In terms of biological role, plays a key role in glucose metabolism and homeostasis. Regulates blood glucose by increasing gluconeogenesis and decreasing glycolysis. A counterregulatory hormone of insulin, raises plasma glucose levels in response to insulin-induced hypoglycemia. Plays an important role in initiating and maintaining hyperglycemic conditions in diabetes. Potent stimulator of glucose-dependent insulin release. Also stimulates insulin release in response to IL6. Plays important roles on gastric motility and the suppression of plasma glucagon levels. May be involved in the suppression of satiety and stimulation of glucose disposal in peripheral tissues, independent of the actions of insulin. Has growth-promoting activities on intestinal epithelium. May also regulate the hypothalamic pituitary axis (HPA) via effects on LH, TSH, CRH, oxytocin, and vasopressin secretion. Increases islet mass through stimulation of islet neogenesis and pancreatic beta cell proliferation. Inhibits beta cell apoptosis. Its function is as follows. Stimulates intestinal growth and up-regulates villus height in the small intestine, concomitant with increased crypt cell proliferation and decreased enterocyte apoptosis. The gastrointestinal tract, from the stomach to the colon is the principal target for GLP-2 action. Plays a key role in nutrient homeostasis, enhancing nutrient assimilation through enhanced gastrointestinal function, as well as increasing nutrient disposal. Stimulates intestinal glucose transport and decreases mucosal permeability. Functionally, significantly reduces food intake. Inhibits gastric emptying in humans. Suppression of gastric emptying may lead to increased gastric distension, which may contribute to satiety by causing a sensation of fullness. In terms of biological role, may modulate gastric acid secretion and the gastro-pyloro-duodenal activity. May play an important role in intestinal mucosal growth in the early period of life. In Sus scrofa (Pig), this protein is Pro-glucagon (GCG).